Reading from the N-terminus, the 512-residue chain is 2-isopropylmalate synthase (512 aa).

The Pyruvate carboxyltransferase domain maps to Ile-4–Lys-266. Mn(2+) is bound by residues Asp-13, His-201, His-203, and Asn-237. The regulatory domain stretch occupies residues Glu-390 to Lys-512.

This sequence belongs to the alpha-IPM synthase/homocitrate synthase family. LeuA type 1 subfamily. Homodimer. Mn(2+) serves as cofactor.

Its subcellular location is the cytoplasm. It carries out the reaction 3-methyl-2-oxobutanoate + acetyl-CoA + H2O = (2S)-2-isopropylmalate + CoA + H(+). It participates in amino-acid biosynthesis; L-leucine biosynthesis; L-leucine from 3-methyl-2-oxobutanoate: step 1/4. Catalyzes the condensation of the acetyl group of acetyl-CoA with 3-methyl-2-oxobutanoate (2-ketoisovalerate) to form 3-carboxy-3-hydroxy-4-methylpentanoate (2-isopropylmalate). This chain is 2-isopropylmalate synthase, found in Listeria monocytogenes serotype 4b (strain CLIP80459).